The primary structure comprises 555 residues: Myo-inositol transporter 2 (555 aa).

The Cytoplasmic portion of the chain corresponds to 1 to 61; sequence MSSTLDTITP…NLVRAENEDK (61 aa). Residues 62 to 82 form a helical membrane-spanning segment; that stretch reads VTPYFMFLISVAAIAGFLFGY. The Extracellular segment spans residues 83–108; that stretch reads DTGIVGAALPMVGTSLGHTLSATESE. A helical membrane pass occupies residues 109–129; it reads IITAGTTIGAIFGASILGTMA. At 130 to 142 the chain is on the cytoplasmic side; the sequence is DKLGRKWAMIISD. A helical transmembrane segment spans residues 143-163; it reads FAFTAGAIIIAASYSVPQIIV. Topologically, residues 164 to 165 are extracellular; that stretch reads GR. Residues 166–186 traverse the membrane as a helical segment; sequence LVLGVGVGGAAVIAPLYIAEL. Residues 187 to 200 lie on the Cytoplasmic side of the membrane; sequence APTAVRGRCVGANA. Residues 201 to 221 form a helical membrane-spanning segment; the sequence is FCIPFGQVVASAIGAGFQAGV. At 222-228 the chain is on the extracellular side; it reads PYHIGWR. Residues 229-249 traverse the membrane as a helical segment; the sequence is VLFGLGVVPSVVQLCLMHFLP. Topologically, residues 250 to 328 are cytoplasmic; the sequence is ESPRVLVLRG…AIISVSGVQA (79 aa). Residues 329 to 349 traverse the membrane as a helical segment; it reads FGQLTGFNTLLYYSGTIFGLL. Topologically, residues 350–355 are extracellular; it reads GLKNGA. A helical transmembrane segment spans residues 356–376; it reads AAGLIPSCLNALFVFIGMSIV. The Cytoplasmic portion of the chain corresponds to 377-385; the sequence is DKVGRRKLM. A helical membrane pass occupies residues 386–406; that stretch reads ITFIPGMMIAFTWTIISFHFL. The Extracellular portion of the chain corresponds to 407–427; the sequence is TKPTGGLLLKDYQYSTPLVGS. A helical membrane pass occupies residues 428–448; it reads VLGSIVLFVIPFGLTYSHIIW. Residues 449-461 lie on the Cytoplasmic side of the membrane; it reads YQSEFLPLEIRAA. Residues 462–482 traverse the membrane as a helical segment; it reads GSAISTTACWLANLVVSVAYL. Residues 483-487 are Extracellular-facing; it reads TQLEK. The helical transmembrane segment at 488–508 threads the bilayer; it reads LGATGTYGLYLGFITIGYIFV. Over 509-555 the chain is Cytoplasmic; sequence YFCYPETKGLSIDETAEIFIDGFGIEKAHQMLREKRAFAAELYAGRA.

It belongs to the major facilitator superfamily. Sugar transporter (TC 2.A.1.1) family.

It is found in the cell membrane. It carries out the reaction myo-inositol(out) + H(+)(out) = myo-inositol(in) + H(+)(in). Transporter for myo-inositol. The chain is Myo-inositol transporter 2 from Cryptococcus neoformans var. grubii serotype A (strain H99 / ATCC 208821 / CBS 10515 / FGSC 9487) (Filobasidiella neoformans var. grubii).